Reading from the N-terminus, the 332-residue chain is Fructose-1,6-bisphosphatase class 1 (332 aa).

Mg(2+) contacts are provided by E89, D110, L112, and D113. Residues 113–116 (DGSS), N206, Y239, 257–259 (YLY), and K269 contribute to the substrate site. E275 contacts Mg(2+).

The protein belongs to the FBPase class 1 family. Homotetramer. The cofactor is Mg(2+).

It is found in the cytoplasm. It catalyses the reaction beta-D-fructose 1,6-bisphosphate + H2O = beta-D-fructose 6-phosphate + phosphate. Its pathway is carbohydrate biosynthesis; gluconeogenesis. The chain is Fructose-1,6-bisphosphatase class 1 from Citrobacter koseri (strain ATCC BAA-895 / CDC 4225-83 / SGSC4696).